The following is a 471-amino-acid chain: Bifunctional protein GlmU (471 aa).

Residues Met1–Arg232 are pyrophosphorylase. UDP-N-acetyl-alpha-D-glucosamine-binding positions include Leu9 to Gly12, Lys23, Gln73, Gly78 to Thr79, Tyr102 to Asp104, Gly141, Glu157, and Asn230. Asp104 lines the Mg(2+) pocket. Asn230 is a Mg(2+) binding site. The interval Val233–Asn253 is linker. The segment at Gly254 to Thr471 is N-acetyltransferase. UDP-N-acetyl-alpha-D-glucosamine is bound by residues Arg335 and Lys353. The active-site Proton acceptor is His365. Positions 368 and 379 each coordinate UDP-N-acetyl-alpha-D-glucosamine. Residues Ala382, Asn388–Tyr389, Ala425, and Arg444 contribute to the acetyl-CoA site.

In the N-terminal section; belongs to the N-acetylglucosamine-1-phosphate uridyltransferase family. It in the C-terminal section; belongs to the transferase hexapeptide repeat family. Homotrimer. It depends on Mg(2+) as a cofactor.

It localises to the cytoplasm. It carries out the reaction alpha-D-glucosamine 1-phosphate + acetyl-CoA = N-acetyl-alpha-D-glucosamine 1-phosphate + CoA + H(+). It catalyses the reaction N-acetyl-alpha-D-glucosamine 1-phosphate + UTP + H(+) = UDP-N-acetyl-alpha-D-glucosamine + diphosphate. The protein operates within nucleotide-sugar biosynthesis; UDP-N-acetyl-alpha-D-glucosamine biosynthesis; N-acetyl-alpha-D-glucosamine 1-phosphate from alpha-D-glucosamine 6-phosphate (route II): step 2/2. Its pathway is nucleotide-sugar biosynthesis; UDP-N-acetyl-alpha-D-glucosamine biosynthesis; UDP-N-acetyl-alpha-D-glucosamine from N-acetyl-alpha-D-glucosamine 1-phosphate: step 1/1. It participates in bacterial outer membrane biogenesis; LPS lipid A biosynthesis. Its function is as follows. Catalyzes the last two sequential reactions in the de novo biosynthetic pathway for UDP-N-acetylglucosamine (UDP-GlcNAc). The C-terminal domain catalyzes the transfer of acetyl group from acetyl coenzyme A to glucosamine-1-phosphate (GlcN-1-P) to produce N-acetylglucosamine-1-phosphate (GlcNAc-1-P), which is converted into UDP-GlcNAc by the transfer of uridine 5-monophosphate (from uridine 5-triphosphate), a reaction catalyzed by the N-terminal domain. The chain is Bifunctional protein GlmU from Symbiobacterium thermophilum (strain DSM 24528 / JCM 14929 / IAM 14863 / T).